The chain runs to 372 residues: MPPPQQGPCGHHLLLLLALLLPSLPLTRAPVPPGPAAALLQALGLRDEPQGAPRLRPVPPVMWRLFRRRDPQETRSGSRRTSPGVTLQPCHVEELGVAGNIVRHIPDRGAPTRASEPASAAGHCPEWTVVFDLSAVEPAERPSRARLELRFAAAAAAAPEGGWELSVAQAGQGAGADPGPVLLRQLVPALGPPVRAELLGAAWARNASWPRSLRLALALRPRAPAACARLAEASLLLVTLDPRLCHPLARPRRDAEPVLGGGPGGACRARRLYVSFREVGWHRWVIAPRGFLANYCQGQCALPVALSGSGGPPALNHAVLRALMHAAAPGAADLPCCVPARLSPISVLFFDNSDNVVLRQYEDMVVDECGCR.

The first 29 residues, 1–29, serve as a signal peptide directing secretion; the sequence is MPPPQQGPCGHHLLLLLALLLPSLPLTRA. Residues 30-253 constitute a propeptide that is removed on maturation; the sequence is PVPPGPAAAL…LCHPLARPRR (224 aa). Positions 67–86 are disordered; the sequence is RRRDPQETRSGSRRTSPGVT. Residue Asn-206 is glycosylated (N-linked (GlcNAc...) asparagine). 3 disulfide bridges follow: Cys-267–Cys-337, Cys-296–Cys-369, and Cys-300–Cys-371.

Belongs to the TGF-beta family. In terms of assembly, homodimer; disulfide-linked. Expressed in the brain.

It is found in the secreted. In terms of biological role, may mediate cell differentiation events during embryonic development. The sequence is that of Embryonic growth/differentiation factor 1 (GDF1) from Homo sapiens (Human).